The primary structure comprises 466 residues: 55 kDa erythrocyte membrane protein (466 aa).

T2 is modified (N-acetylthreonine). Phosphoserine occurs at positions 13 and 19. T49 carries the post-translational modification Phosphothreonine. A phosphoserine mark is found at S52, S57, and S110. The PDZ domain maps to 71–152; sequence LIQIEKVTEE…MISLKVIPNQ (82 aa). The 71-residue stretch at 158-228 folds into the SH3 domain; it reads ALQMFMRAQF…PSPELQEWRV (71 aa). S243 is modified (phosphoserine). Positions 268 to 466 are interaction with PALS1; that stretch reads VVSYEEVVRL…PQWVPVSWVY (199 aa). The Guanylate kinase-like domain maps to 282-451; that stretch reads RKTLVLIGAS…TLKKLQEAFD (170 aa).

Belongs to the MAGUK family. As to quaternary structure, heterodimer with PALS1. Interacts with DLG5 and NF2. Interacts (via guanylate kinase-like domain) with WHRN (via third PDZ domain). Post-translationally, palmitoylated.

It is found in the cell membrane. The protein resides in the cell projection. The protein localises to the stereocilium. Functionally, essential regulator of neutrophil polarity. Regulates neutrophil polarization by regulating AKT1 phosphorylation through a mechanism that is independent of PIK3CG activity. This Papio anubis (Olive baboon) protein is 55 kDa erythrocyte membrane protein (MPP1).